The primary structure comprises 207 residues: Uridine kinase (207 aa).

Position 14–21 (14–21 (GGSGSGKT)) interacts with ATP.

This sequence belongs to the uridine kinase family.

The protein localises to the cytoplasm. It carries out the reaction uridine + ATP = UMP + ADP + H(+). The enzyme catalyses cytidine + ATP = CMP + ADP + H(+). The protein operates within pyrimidine metabolism; CTP biosynthesis via salvage pathway; CTP from cytidine: step 1/3. Its pathway is pyrimidine metabolism; UMP biosynthesis via salvage pathway; UMP from uridine: step 1/1. The protein is Uridine kinase of Deinococcus deserti (strain DSM 17065 / CIP 109153 / LMG 22923 / VCD115).